The following is a 142-amino-acid chain: Putative pre-16S rRNA nuclease (142 aa).

It belongs to the YqgF nuclease family.

It localises to the cytoplasm. Could be a nuclease involved in processing of the 5'-end of pre-16S rRNA. The protein is Putative pre-16S rRNA nuclease of Staphylococcus aureus (strain bovine RF122 / ET3-1).